A 276-amino-acid polypeptide reads, in one-letter code: Pyrroline-5-carboxylate reductase (276 aa).

Belongs to the pyrroline-5-carboxylate reductase family.

Its subcellular location is the cytoplasm. The enzyme catalyses L-proline + NADP(+) = (S)-1-pyrroline-5-carboxylate + NADPH + 2 H(+). The catalysed reaction is L-proline + NAD(+) = (S)-1-pyrroline-5-carboxylate + NADH + 2 H(+). Its pathway is amino-acid biosynthesis; L-proline biosynthesis; L-proline from L-glutamate 5-semialdehyde: step 1/1. The protein is Pyrroline-5-carboxylate reductase (PROC1) of Arabidopsis thaliana (Mouse-ear cress).